A 240-amino-acid chain; its full sequence is MNTENLLKNNNVDHEEIAKFEAVASRWWDLEGEFKPLHRINPLRLGYIAERAGGLFGKKVLDVGCGGGILAESMAREGATVTGLDMGFEPLQVAKLHALESGIQVEYVQETVEEHAAKHAGQYDVVTCMEMLEHVPDPQSVVRACAQLVKPGGDVFFSTLNRNGKSWLMAVVGAEYILRMVPKGTHDVKKFIKPAELLGWVDQTSLKERHMTGLHYNPITNSFKLGPGVDVNYMLHTQNK.

S-adenosyl-L-methionine-binding residues include Arg-44, Gly-64, Asp-85, and Met-129.

Belongs to the methyltransferase superfamily. UbiG/COQ3 family.

It carries out the reaction a 3-demethylubiquinol + S-adenosyl-L-methionine = a ubiquinol + S-adenosyl-L-homocysteine + H(+). The enzyme catalyses a 3-(all-trans-polyprenyl)benzene-1,2-diol + S-adenosyl-L-methionine = a 2-methoxy-6-(all-trans-polyprenyl)phenol + S-adenosyl-L-homocysteine + H(+). It functions in the pathway cofactor biosynthesis; ubiquinone biosynthesis. O-methyltransferase that catalyzes the 2 O-methylation steps in the ubiquinone biosynthetic pathway. This is Ubiquinone biosynthesis O-methyltransferase from Escherichia coli O7:K1 (strain IAI39 / ExPEC).